We begin with the raw amino-acid sequence, 32 residues long: Photosystem I reaction center subunit XII (32 aa).

A helical transmembrane segment spans residues 9–31 (VYVALVSALITSFLAVRLGLALY).

It belongs to the PsaM family.

The protein localises to the plastid. It is found in the chloroplast thylakoid membrane. In Chaetosphaeridium globosum (Charophycean green alga), this protein is Photosystem I reaction center subunit XII.